We begin with the raw amino-acid sequence, 195 residues long: dITP/XTP pyrophosphatase (195 aa).

8–13 (SGNAGK) is a substrate binding site. Mg(2+) contacts are provided by Glu-38 and Asp-67. The active-site Proton acceptor is the Asp-67. Residues Ser-68, 146 to 149 (FGYD), Lys-169, and 174 to 175 (HR) each bind substrate.

This sequence belongs to the HAM1 NTPase family. In terms of assembly, homodimer. Mg(2+) serves as cofactor.

It catalyses the reaction XTP + H2O = XMP + diphosphate + H(+). The catalysed reaction is dITP + H2O = dIMP + diphosphate + H(+). It carries out the reaction ITP + H2O = IMP + diphosphate + H(+). Functionally, pyrophosphatase that catalyzes the hydrolysis of nucleoside triphosphates to their monophosphate derivatives, with a high preference for the non-canonical purine nucleotides XTP (xanthosine triphosphate), dITP (deoxyinosine triphosphate) and ITP. Seems to function as a house-cleaning enzyme that removes non-canonical purine nucleotides from the nucleotide pool, thus preventing their incorporation into DNA/RNA and avoiding chromosomal lesions. The chain is dITP/XTP pyrophosphatase from Parasynechococcus marenigrum (strain WH8102).